Here is a 283-residue protein sequence, read N- to C-terminus: MSARAIDGNALSRHLRHEVAQRAATLREHGITPGLAVILVGENPASQVYVRNKVKACHDSGLHSVLEHYPAAMTEAELLARVQALNADPAIHGILVQLPLPPHIDAHRVIETIAPHKDVDGFHVASAGALMVGQPGFKPCTPYGCMKMLESIGYDPKGKHAVVIGRSNIVGKPMAMLLLQANATVTVCHSATPDLALHTRQADIVVAAVGKRKVLTADMVKPGAVVIDVGMNRDDHGKLCGDVDYAGVAKVAGWITPVPGGVGPMTITMLLMNTLESAERLVG.

NADP(+) contacts are provided by residues Gly165–Ser167 and Ser190.

Belongs to the tetrahydrofolate dehydrogenase/cyclohydrolase family. As to quaternary structure, homodimer.

The catalysed reaction is (6R)-5,10-methylene-5,6,7,8-tetrahydrofolate + NADP(+) = (6R)-5,10-methenyltetrahydrofolate + NADPH. The enzyme catalyses (6R)-5,10-methenyltetrahydrofolate + H2O = (6R)-10-formyltetrahydrofolate + H(+). It participates in one-carbon metabolism; tetrahydrofolate interconversion. Its function is as follows. Catalyzes the oxidation of 5,10-methylenetetrahydrofolate to 5,10-methenyltetrahydrofolate and then the hydrolysis of 5,10-methenyltetrahydrofolate to 10-formyltetrahydrofolate. This is Bifunctional protein FolD from Methylibium petroleiphilum (strain ATCC BAA-1232 / LMG 22953 / PM1).